We begin with the raw amino-acid sequence, 239 residues long: Phosphoribosylaminoimidazole-succinocarboxamide synthase (239 aa).

The protein belongs to the SAICAR synthetase family.

It carries out the reaction 5-amino-1-(5-phospho-D-ribosyl)imidazole-4-carboxylate + L-aspartate + ATP = (2S)-2-[5-amino-1-(5-phospho-beta-D-ribosyl)imidazole-4-carboxamido]succinate + ADP + phosphate + 2 H(+). It functions in the pathway purine metabolism; IMP biosynthesis via de novo pathway; 5-amino-1-(5-phospho-D-ribosyl)imidazole-4-carboxamide from 5-amino-1-(5-phospho-D-ribosyl)imidazole-4-carboxylate: step 1/2. The chain is Phosphoribosylaminoimidazole-succinocarboxamide synthase from Acinetobacter baumannii (strain AB307-0294).